A 123-amino-acid chain; its full sequence is Large ribosomal subunit protein uL14 (123 aa).

Belongs to the universal ribosomal protein uL14 family. As to quaternary structure, part of the 50S ribosomal subunit. Forms a cluster with proteins L3 and L19. In the 70S ribosome, L14 and L19 interact and together make contacts with the 16S rRNA in bridges B5 and B8.

Its function is as follows. Binds to 23S rRNA. Forms part of two intersubunit bridges in the 70S ribosome. The sequence is that of Large ribosomal subunit protein uL14 from Blochmanniella pennsylvanica (strain BPEN).